The primary structure comprises 279 residues: Energy-coupling factor transporter ATP-binding protein EcfA1 (279 aa).

The ABC transporter domain maps to Val-6 to Gly-240. Gly-40 to Ser-47 serves as a coordination point for ATP.

This sequence belongs to the ABC transporter superfamily. Energy-coupling factor EcfA family. As to quaternary structure, forms a stable energy-coupling factor (ECF) transporter complex composed of 2 membrane-embedded substrate-binding proteins (S component), 2 ATP-binding proteins (A component) and 2 transmembrane proteins (T component).

It localises to the cell membrane. Functionally, ATP-binding (A) component of a common energy-coupling factor (ECF) ABC-transporter complex. Unlike classic ABC transporters this ECF transporter provides the energy necessary to transport a number of different substrates. This is Energy-coupling factor transporter ATP-binding protein EcfA1 from Listeria monocytogenes serotype 4b (strain F2365).